The following is a 155-amino-acid chain: 6,7-dimethyl-8-ribityllumazine synthase (155 aa).

Residues Phe23, 57–59 (AFE), and 81–83 (AVI) contribute to the 5-amino-6-(D-ribitylamino)uracil site. Residue 86-87 (ST) coordinates (2S)-2-hydroxy-3-oxobutyl phosphate. The Proton donor role is filled by His89. Phe114 contacts 5-amino-6-(D-ribitylamino)uracil. Arg128 is a (2S)-2-hydroxy-3-oxobutyl phosphate binding site.

It belongs to the DMRL synthase family.

It carries out the reaction (2S)-2-hydroxy-3-oxobutyl phosphate + 5-amino-6-(D-ribitylamino)uracil = 6,7-dimethyl-8-(1-D-ribityl)lumazine + phosphate + 2 H2O + H(+). The protein operates within cofactor biosynthesis; riboflavin biosynthesis; riboflavin from 2-hydroxy-3-oxobutyl phosphate and 5-amino-6-(D-ribitylamino)uracil: step 1/2. In terms of biological role, catalyzes the formation of 6,7-dimethyl-8-ribityllumazine by condensation of 5-amino-6-(D-ribitylamino)uracil with 3,4-dihydroxy-2-butanone 4-phosphate. This is the penultimate step in the biosynthesis of riboflavin. In Dehalococcoides mccartyi (strain ATCC BAA-2266 / KCTC 15142 / 195) (Dehalococcoides ethenogenes (strain 195)), this protein is 6,7-dimethyl-8-ribityllumazine synthase.